The primary structure comprises 417 residues: Lysosome-associated membrane glycoprotein 1 (417 aa).

The first 28 residues, 1 to 28 (MAAPGSARRPLLLLLLLLLLGLMHCASA), serve as a signal peptide directing secretion. The segment at 29–194 (AMFMVKNGNG…SRGETRCEQD (166 aa)) is first lumenal domain. Residues 29–382 (AMFMVKNGNG…EECLLDENSM (354 aa)) are Lumenal-facing. N-linked (GlcNAc...) asparagine glycans are attached at residues N37 and N45. The cysteines at positions 41 and 80 are disulfide-linked. N62 carries N-linked (GlcNAc...) (polylactosaminoglycan) asparagine glycosylation. Residues N76, N84, N103, and N107 are each glycosylated (N-linked (GlcNAc...) asparagine). N121 and N130 each carry an N-linked (GlcNAc...) (polylactosaminoglycan) asparagine glycan. A disulfide bridge links C155 with C191. N165 and N181 each carry an N-linked (GlcNAc...) asparagine glycan. The segment at 184–221 (FSRGETRCEQDRPSPTTAPPAPPSPSPSPVPKSPSVDK) is disordered. The interval 195 to 227 (RPSPTTAPPAPPSPSPSPVPKSPSVDKYNVSGT) is hinge. O-linked (GalNAc...) serine; partial glycosylation is present at S197. 2 O-linked (GalNAc...) threonine glycosylation sites follow: T199 and T200. Over residues 199-215 (TTAPPAPPSPSPSPVPK) the composition is skewed to pro residues. 3 O-linked (GalNAc...) serine glycosylation sites follow: S207, S209, and S211. 2 N-linked (GlcNAc...) (polylactosaminoglycan) asparagine glycosylation sites follow: N223 and N228. Residues 228–382 (NGTCLLASMG…EECLLDENSM (155 aa)) form a second lumenal domain region. C231 and C269 form a disulfide bridge. N-linked (GlcNAc...) asparagine glycans are attached at residues N241, N249, N261, N293, and N322. Residues C338 and C375 are joined by a disulfide bond. Residues 383 to 410 (LIPIAVGGALAGLVLIVLIAYLVGRKRS) traverse the membrane as a helical segment. Residues 411-417 (HAGYQTI) lie on the Cytoplasmic side of the membrane.

Belongs to the LAMP family. In terms of assembly, interacts with ABCB9; this interaction strongly stabilizes ABCB9 and protects ABCB9 against lysosomal degradation. Interacts with FURIN. Interacts with TMEM175; inhibiting the proton channel activity of TMEM175. (Microbial infection) Interacts with Lassa virus protein glycoprotein. As to quaternary structure, (Microbial infection) Interacts with mumps virus protein F; this interaction promotes protein F cleavage by FURIN. In terms of processing, O- and N-glycosylated; some of the 18 N-linked glycans are polylactosaminoglycans. Post-translationally, (Microbial infection) The glycosylation of Asn-76 is essential for Lassa virus entry into cells.

It localises to the lysosome membrane. Its subcellular location is the endosome membrane. The protein resides in the late endosome membrane. The protein localises to the cell membrane. It is found in the cytolytic granule membrane. In terms of biological role, lysosomal membrane glycoprotein which plays an important role in lysosome biogenesis, lysosomal pH regulation, autophagy and cholesterol homeostasis. Acts as an important regulator of lysosomal lumen pH regulation by acting as a direct inhibitor of the proton channel TMEM175, facilitating lysosomal acidification for optimal hydrolase activity. Also plays an important role in NK-cells cytotoxicity. Mechanistically, participates in cytotoxic granule movement to the cell surface and perforin trafficking to the lytic granule. In addition, protects NK-cells from degranulation-associated damage induced by their own cytotoxic granule content. Presents carbohydrate ligands to selectins. Functionally, (Microbial infection) Acts as a receptor for Lassa virus glycoprotein. Also promotes fusion of the virus with host membrane in less acidic endosomes. (Microbial infection) Supports the FURIN-mediated cleavage of mumps virus fusion protein F by interacting with both FURIN and the unprocessed form but not the processed form of the viral protein F. This Homo sapiens (Human) protein is Lysosome-associated membrane glycoprotein 1.